An 875-amino-acid chain; its full sequence is Alanine--tRNA ligase (875 aa).

H564, H568, C666, and H670 together coordinate Zn(2+).

This sequence belongs to the class-II aminoacyl-tRNA synthetase family. As to quaternary structure, homotetramer. Zn(2+) serves as cofactor.

The protein localises to the cytoplasm. It catalyses the reaction tRNA(Ala) + L-alanine + ATP = L-alanyl-tRNA(Ala) + AMP + diphosphate. Catalyzes the attachment of alanine to tRNA(Ala) in a two-step reaction: alanine is first activated by ATP to form Ala-AMP and then transferred to the acceptor end of tRNA(Ala). Also edits incorrectly charged Ser-tRNA(Ala) and Gly-tRNA(Ala) via its editing domain. The polypeptide is Alanine--tRNA ligase (Pectobacterium atrosepticum (strain SCRI 1043 / ATCC BAA-672) (Erwinia carotovora subsp. atroseptica)).